The following is a 520-amino-acid chain: Amine oxidase [flavin-containing] B (520 aa).

Ser-2 carries the post-translational modification N-acetylserine. Residues Ser-2–Val-489 lie on the Cytoplasmic side of the membrane. Position 52 is an N6-acetyllysine (Lys-52). Position 397 is an S-8alpha-FAD cysteine (Cys-397). A helical; Anchor for type IV membrane protein transmembrane segment spans residues Pro-490 to Leu-516. Residues Leu-517–Val-520 are Mitochondrial intermembrane-facing.

The protein belongs to the flavin monoamine oxidase family. As to quaternary structure, monomer, homo- or heterodimer (containing two subunits of similar size). Each subunit contains a covalently bound flavin. Enzymatically active as monomer. FAD serves as cofactor.

Its subcellular location is the mitochondrion outer membrane. The catalysed reaction is a secondary aliphatic amine + O2 + H2O = a primary amine + an aldehyde + H2O2. It carries out the reaction (R)-adrenaline + O2 + H2O = (R)-3,4-dihydroxymandelaldehyde + methylamine + H2O2. The enzyme catalyses a primary methyl amine + O2 + H2O = an aldehyde + H2O2 + NH4(+). It catalyses the reaction benzylamine + O2 + H2O = benzaldehyde + H2O2 + NH4(+). The catalysed reaction is dopamine + O2 + H2O = 3,4-dihydroxyphenylacetaldehyde + H2O2 + NH4(+). It carries out the reaction tyramine + O2 + H2O = (4-hydroxyphenyl)acetaldehyde + H2O2 + NH4(+). The enzyme catalyses (R)-noradrenaline + O2 + H2O = (R)-3,4-dihydroxymandelaldehyde + H2O2 + NH4(+). It catalyses the reaction 2-phenylethylamine + O2 + H2O = 2-phenylacetaldehyde + H2O2 + NH4(+). The catalysed reaction is N-acetylputrescine + O2 + H2O = 4-acetamidobutanal + H2O2 + NH4(+). Functionally, catalyzes the oxidative deamination of primary and some secondary amines such as neurotransmitters, and exogenous amines including the tertiary amine, neurotoxin 1-methyl-4-phenyl-1,2,3,6-tetrahydropyridine (MPTP), with concomitant reduction of oxygen to hydrogen peroxide and participates in the metabolism of neuroactive and vasoactive amines in the central nervous system and peripheral tissues. Preferentially degrades benzylamine and phenylethylamine. The protein is Amine oxidase [flavin-containing] B of Sus scrofa (Pig).